A 428-amino-acid polypeptide reads, in one-letter code: Spliceosome RNA helicase DDX39B (428 aa).

A compositionally biased stretch (acidic residues) spans 1-19; it reads MAENDVDNELLDYEEDEVE. Residues 1–35 form a disordered region; sequence MAENDVDNELLDYEEDEVENAAGGDGSEAPPKKDV. The Q motif motif lies at 45-73; it reads SGFRDFLLKPELLRAIVDCGFEHPSEVQH. The Helicase ATP-binding domain maps to 76–249; it reads IPQAILGMDV…RKFMQDPMEI (174 aa). 89-96 contributes to the ATP binding site; it reads AKSGMGKT. Residues 196–199 carry the DECD box motif; the sequence is DECD. In terms of domain architecture, Helicase C-terminal spans 261-422; sequence GLQQYYVKLK…ELPDEIDISS (162 aa).

This sequence belongs to the DEAD box helicase family. DECD subfamily. In terms of assembly, component of the transcription/export (TREX) complex at least composed of ALYREF/THOC4, DDX39B, SARNP/CIP29, CHTOP and the THO subcomplex.

The protein resides in the nucleus. It is found in the nucleus speckle. It catalyses the reaction ATP + H2O = ADP + phosphate + H(+). In terms of biological role, involved in nuclear export of spliced and unspliced mRNA. Component of the TREX complex which is thought to couple mRNA transcription, processing and nuclear export, and specifically associates with spliced mRNA and not with unspliced pre-mRNA. The TREX complex is recruited to spliced mRNAs by a transcription-independent mechanism, binds to mRNA upstream of the exon-junction complex (EJC) and is recruited in a splicing- and cap-dependent manner to a region near the 5' end of the mRNA where it functions in mRNA export to the cytoplasm via the TAP/NXF1 pathway. Involved in transcription elongation and genome stability. Its function is as follows. Splice factor that is required for the first ATP-dependent step in spliceosome assembly and for the interaction of U2 snRNP with the branchpoint. Has both RNA-stimulated ATP binding/hydrolysis activity and ATP-dependent RNA unwinding activity. Even with the stimulation of RNA, the ATPase activity is weak. Can only hydrolyze ATP but not other NTPs. The RNA stimulation of ATPase activity does not have a strong preference for the sequence and length of the RNA. However, ssRNA stimulates the ATPase activity much more strongly than dsRNA. Can unwind 5' or 3' overhangs or blunt end RNA duplexes in vitro. The ATPase and helicase activities are not influenced by U2AF2; the effect of ALYREF/THOC4 is reported conflictingly. In Gallus gallus (Chicken), this protein is Spliceosome RNA helicase DDX39B (DDX39B).